A 586-amino-acid chain; its full sequence is Phosphoenolpyruvate-protein phosphotransferase (586 aa).

H201 acts as the Tele-phosphohistidine intermediate in catalysis. Positions 308 and 345 each coordinate phosphoenolpyruvate. E446 and D470 together coordinate Mg(2+). Phosphoenolpyruvate contacts are provided by residues 469 to 470 (ND) and R480. C517 (proton donor) is an active-site residue.

This sequence belongs to the PEP-utilizing enzyme family. In terms of assembly, homodimer. The cofactor is Mg(2+).

It is found in the cytoplasm. The enzyme catalyses L-histidyl-[protein] + phosphoenolpyruvate = N(pros)-phospho-L-histidyl-[protein] + pyruvate. Its function is as follows. General (non sugar-specific) component of the phosphoenolpyruvate-dependent sugar phosphotransferase system (sugar PTS). This major carbohydrate active-transport system catalyzes the phosphorylation of incoming sugar substrates concomitantly with their translocation across the cell membrane. Enzyme I transfers the phosphoryl group from phosphoenolpyruvate (PEP) to the phosphoryl carrier protein (HPr). This is Phosphoenolpyruvate-protein phosphotransferase from Cupriavidus necator (strain ATCC 17699 / DSM 428 / KCTC 22496 / NCIMB 10442 / H16 / Stanier 337) (Ralstonia eutropha).